We begin with the raw amino-acid sequence, 450 residues long: Signal recognition particle 54 kDa protein (450 aa).

GTP is bound by residues 107-114, 188-192, and 247-250; these read GIQGSGKT, DTAGR, and TKLD.

This sequence belongs to the GTP-binding SRP family. SRP54 subfamily. In terms of assembly, part of the signal recognition particle protein translocation system, which is composed of SRP and FtsY. Archaeal SRP consists of a 7S RNA molecule of 300 nucleotides and two protein subunits: SRP54 and SRP19.

Its subcellular location is the cytoplasm. The catalysed reaction is GTP + H2O = GDP + phosphate + H(+). Functionally, involved in targeting and insertion of nascent membrane proteins into the cytoplasmic membrane. Binds to the hydrophobic signal sequence of the ribosome-nascent chain (RNC) as it emerges from the ribosomes. The SRP-RNC complex is then targeted to the cytoplasmic membrane where it interacts with the SRP receptor FtsY. The sequence is that of Signal recognition particle 54 kDa protein from Methanococcus maripaludis (strain DSM 14266 / JCM 13030 / NBRC 101832 / S2 / LL).